The primary structure comprises 276 residues: UPF0328 protein ECU03_0010 (276 aa).

Disordered regions lie at residues 1-132 and 156-176; these read MAAP…PIIS and SFCQ…NMVH. Basic and acidic residues predominate over residues 106 to 126; that stretch reads HTEGCHTHEANPEPNTKHTET.

This sequence belongs to the UPF0328 family.

The chain is UPF0328 protein ECU03_0010 from Encephalitozoon cuniculi (strain GB-M1) (Microsporidian parasite).